The following is a 146-amino-acid chain: Acidic phospholipase A2 C (146 aa).

The signal sequence occupies residues 1–21; sequence MNPAHLLILAAVCVSPLGASS. A propeptide spanning residues 22–27 is cleaved from the precursor; that stretch reads NRPMPL. Intrachain disulfides connect C38–C98, C53–C145, C55–C71, C70–C126, C77–C119, C87–C112, and C105–C117. The Ca(2+) site is built by Y54, G56, and G58. H74 is an active-site residue. A Ca(2+)-binding site is contributed by D75. Residue D120 is part of the active site.

It belongs to the phospholipase A2 family. Group I subfamily. D49 sub-subfamily. The cofactor is Ca(2+). In terms of tissue distribution, expressed by the venom gland.

Its subcellular location is the secreted. The catalysed reaction is a 1,2-diacyl-sn-glycero-3-phosphocholine + H2O = a 1-acyl-sn-glycero-3-phosphocholine + a fatty acid + H(+). Its function is as follows. PLA2 catalyzes the calcium-dependent hydrolysis of the 2-acyl groups in 3-sn-phosphoglycerides. This is Acidic phospholipase A2 C from Naja sputatrix (Malayan spitting cobra).